The chain runs to 108 residues: Insulin (108 aa).

Residues 1–21 form the signal peptide; it reads MAVWIQAGALLFLLAVSSVNA. 3 disulfides stabilise this stretch: cysteine 30-cysteine 94, cysteine 42-cysteine 107, and cysteine 93-cysteine 98. The propeptide at 54–85 is c peptide; that stretch reads DVDPPLGFLPPKSAQETEVADFAFKDHAEVIR.

Belongs to the insulin family. As to quaternary structure, heterodimer of a B chain and an A chain linked by two disulfide bonds.

It is found in the secreted. Insulin decreases blood glucose concentration. It increases cell permeability to monosaccharides, amino acids and fatty acids. It accelerates glycolysis, the pentose phosphate cycle, and glycogen synthesis in liver. In Cyprinus carpio (Common carp), this protein is Insulin (ins).